The following is a 433-amino-acid chain: MQALNITAEQFSRLLSAHNLTREQFIHRYGLRPLVYTPELPARAKLAFALAGALIFALALFGNSLVIYVVTRSKAMRTVTNIFICSLALSDLLIAFFCIPVTMLQNISDKWLGGAFICKMVPFVQSTAVVTEILTMTCIAVERHQGLIHPFKMKWQYTTRRAFTILGVVWLAAIIVGSPMWHVQRLEIKYDFLYEKEHVCCLEEWASPMHQRIYTTFILVILFLLPLVVMLVLYSKIGYELWIKKRVGDSSALQTIHGKEMSKIARKKKRAVVMMVTVVALFAACWAPFHVVHMMVEYSNFEKEYDDVTIKMVFAVAQTIGFFNSICNPFVYAFMNENFKKNFLSAVCYCIVRETFSPGQKPGNSGISMMQKRAKLSRSQRPVAEAKGDLFSDANVDVKLCEQPGEKRQLKRQLAFFSSELSENSTFGSGHEL.

The Extracellular portion of the chain corresponds to 1–46 (MQALNITAEQFSRLLSAHNLTREQFIHRYGLRPLVYTPELPARAKL). N-linked (GlcNAc...) asparagine glycans are attached at residues Asn-5 and Asn-19. A helical transmembrane segment spans residues 47-67 (AFALAGALIFALALFGNSLVI). Residues 68-81 (YVVTRSKAMRTVTN) are Cytoplasmic-facing. The helical transmembrane segment at 82 to 102 (IFICSLALSDLLIAFFCIPVT) threads the bilayer. Residues 103–120 (MLQNISDKWLGGAFICKM) lie on the Extracellular side of the membrane. A helical transmembrane segment spans residues 121-141 (VPFVQSTAVVTEILTMTCIAV). Residues 142 to 162 (ERHQGLIHPFKMKWQYTTRRA) are Cytoplasmic-facing. Residues 163–183 (FTILGVVWLAAIIVGSPMWHV) form a helical membrane-spanning segment. Over 184–212 (QRLEIKYDFLYEKEHVCCLEEWASPMHQR) the chain is Extracellular. Residues 213-233 (IYTTFILVILFLLPLVVMLVL) form a helical membrane-spanning segment. The Cytoplasmic segment spans residues 234–271 (YSKIGYELWIKKRVGDSSALQTIHGKEMSKIARKKKRA). A helical membrane pass occupies residues 272-292 (VVMMVTVVALFAACWAPFHVV). Topologically, residues 293–313 (HMMVEYSNFEKEYDDVTIKMV) are extracellular. A helical membrane pass occupies residues 314–334 (FAVAQTIGFFNSICNPFVYAF). At 335 to 433 (MNENFKKNFL…NSTFGSGHEL (99 aa)) the chain is on the cytoplasmic side.

This sequence belongs to the G-protein coupled receptor 1 family. In terms of tissue distribution, expressed widely in the brain with high levels in the cortex and hypothalamus, and moderate levels in the brain stem, caudate nucleus, midbrain hippocampus, thalamus, trigeminal ganglia and spinal cord. Particularly strong expression detected in the mitral cell layer of the olfactory bulb, accessory olfactory bulb, island of Calleja and nucleus of the solitary tract. In peripheral tissues, expressed at moderate levels in the eye, liver, kidney, pituitary gland, testis and thymus.

Its subcellular location is the cell membrane. Its function is as follows. Receptor for the orexigenic neuropeptide QRFP. The activity of this receptor is mediated by G proteins that modulate adenylate cyclase activity and intracellular calcium levels. The chain is Pyroglutamylated RF-amide peptide receptor (Qrfpr) from Mus musculus (Mouse).